The chain runs to 1014 residues: MLRFVSSQTCRYSSRGLLKTSLLKNASTVKIVGRGLATTGTDNFLSTSNATYIDEMYQAWQKDPSSVHVSWDAYFKNMSNPKIPATKAFQAPPSISNFPQGTEAAPLGTAMTGSVDENVSIHLKVQLLCRAYQVRGHLKAHIDPLGISFGSNKNNPVPPELTLDYYGFSKHDLDKEINLGPGILPRFARDGKSKMSLKEIVDHLEKLYCSSYGVQYTHIPSKQKCDWLRERIEIPEPYQYTVDQKRQILDRLTWATSFESFLSTKFPNDKRFGLEGLESVVPGIKTLVDRSVELGVEDIVLGMAHRGRLNVLSNVVRKPNESIFSEFKGSSARDDIEGSGDVKYHLGMNYQRPTTSGKYVNLSLVANPSHLESQDPVVLGRTRALLHAKNDLKEKTKALGVLLHGDAAFAGQGVVYETMGFLTLPEYSTGGTIHVITNNQIGFTTDPRFARSTPYPSDLAKAIDAPIFHVNANDVEAVTFIFNLAAEWRHKFHTDAIIDVVGWRKHGHNETDQPSFTQPLMYKKIAKQKSVIDVYTEKLISEGTFSKKDIDEHKKWVWNLFEDAFEKAKDYVPSQREWLTAAWEGFKSPKELATEILPHEPTNVPESTLKELGKVLSSWPEGFEVHKNLKRILKNRGKSIETGEGIDWATGEALAFGTLVLDGQNVRVSGEDVERGTFSQRHAVLHDQQSEAIYTPLSTLNNEKADFTIANSSLSEYGVMGFEYGYSLTSPDYLVMWEAQFGDFANTAQVIIDQFIAGGEQKWKQRSGLVLSLPHGYDGQGPEHSSGRLERFLQLANEDPRYFPSEEKLQRQHQDCNFQVVYPTTPANLFHILRRQQHRQFRKPLALFFSKQLLRHPLARSSLSEFTEGGFQWIIEDIEHGKSIGTKEETKRLVLLSGQVYTALHKRRESLGDKTTAFLKIEQLHPFPFAQLRDSLNSYPNLEEIVWCQEEPLNMGSWAYTEPRLHTTLKETDKYKDFKVRYCGRNPSGAVAAGSKSLHLAEEDAFLKDVFQQS.

The transit peptide at 1–30 directs the protein to the mitochondrion; that stretch reads MLRFVSSQTCRYSSRGLLKTSLLKNASTVK. Thiamine diphosphate is bound by residues arginine 306, aspartate 406, asparagine 439, and isoleucine 441. Mg(2+) contacts are provided by aspartate 406, asparagine 439, and isoleucine 441.

The protein belongs to the alpha-ketoglutarate dehydrogenase family. In terms of assembly, component of the 2-oxoglutarate dehydrogenase complex (OGDC), also called alpha-ketoglutarate dehydrogenase (KGDH) complex. The copmplex is composed of the catalytic subunits OGDH (2-oxoglutarate dehydrogenase KGD1; also called E1 subunit), DLST (dihydrolipoamide succinyltransferase KGD2; also called E2 subunit) and DLD (dihydrolipoamide dehydrogenase LPD1; also called E3 subunit), and the assembly factor KGD4. Thiamine diphosphate is required as a cofactor. Requires Mg(2+) as cofactor.

It localises to the mitochondrion. The protein localises to the mitochondrion matrix. It is found in the mitochondrion nucleoid. It catalyses the reaction N(6)-[(R)-lipoyl]-L-lysyl-[protein] + 2-oxoglutarate + H(+) = N(6)-[(R)-S(8)-succinyldihydrolipoyl]-L-lysyl-[protein] + CO2. Catabolite repressed. Its function is as follows. The 2-oxoglutarate dehydrogenase complex catalyzes the overall conversion of 2-oxoglutarate to succinyl-CoA and CO(2). It contains multiple copies of three enzymatic components: 2-oxoglutarate dehydrogenase (E1), dihydrolipoamide succinyltransferase (E2) and lipoamide dehydrogenase (E3). The chain is 2-oxoglutarate dehydrogenase, mitochondrial (KGD1) from Saccharomyces cerevisiae (strain ATCC 204508 / S288c) (Baker's yeast).